The sequence spans 131 residues: Small ribosomal subunit protein bS6 (131 aa).

Positions 96-131 are disordered; it reads VTAPSPMMKEEKSKSLLAKDEAAAPAPAPATEQATA. The span at 103–117 shows a compositional bias: basic and acidic residues; it reads MKEEKSKSLLAKDEA. The span at 118-131 shows a compositional bias: low complexity; it reads AAPAPAPATEQATA.

It belongs to the bacterial ribosomal protein bS6 family.

Binds together with bS18 to 16S ribosomal RNA. The polypeptide is Small ribosomal subunit protein bS6 (Methylobacillus flagellatus (strain ATCC 51484 / DSM 6875 / VKM B-1610 / KT)).